Here is a 562-residue protein sequence, read N- to C-terminus: Tissue-type plasminogen activator (562 aa).

Residues 1–19 (MYALKRELWCVLLLCGAIC) form the signal peptide. Residues 20–32 (TSPSQETHRRLRR) constitute a propeptide that is removed on maturation. Residues 33 to 35 (GVR) constitute a propeptide, removed by plasmin. In terms of domain architecture, Fibronectin type-I spans 39-81 (VTCRDEKTQMIYQQHQSWLRPLLRGNRVEHCWCNDGQTQCHSV). Cystine bridges form between Cys-41–Cys-71, Cys-69–Cys-78, Cys-86–Cys-97, Cys-91–Cys-108, Cys-110–Cys-119, Cys-127–Cys-208, Cys-148–Cys-190, Cys-179–Cys-203, Cys-215–Cys-296, Cys-236–Cys-278, Cys-267–Cys-291, Cys-299–Cys-430, Cys-342–Cys-358, Cys-350–Cys-419, Cys-444–Cys-519, Cys-476–Cys-492, and Cys-509–Cys-537. Positions 42-52 (RDEKTQMIYQQ) are important for binding to annexin A2. The 39-residue stretch at 82 to 120 (PVKSCSEPRCFNGGTCLQAIYFSDFVCQCPVGFIGRQCE) folds into the EGF-like domain. Thr-96 carries O-linked (Fuc) threonine glycosylation. Kringle domains follow at residues 126-208 (TCYE…TPAC) and 214-296 (ECYT…LPQC). The N-linked (GlcNAc...) asparagine glycan is linked to Asn-152. The Peptidase S1 domain occupies 311–561 (IKGGLYADIT…YLNWIRDNTR (251 aa)). Residues His-357 and Asp-406 each act as charge relay system in the active site. Asn-483 carries an N-linked (GlcNAc...) asparagine glycan. The Charge relay system role is filled by Ser-513.

Belongs to the peptidase S1 family. As to quaternary structure, heterodimer of chain A and chain B held by a disulfide bond. Binds to fibrin with high affinity. This interaction leads to an increase in the catalytic efficiency of the enzyme due to an increase in affinity for plasminogen. Similarly, binding to heparin increases the activation of plasminogen. Binds to annexin A2, cytokeratin-8, fibronectin and laminin. Binds to mannose receptor and the low-density lipoprotein receptor-related protein (LRP1); these proteins are involved in TPA clearance. Binds LRP1B; binding is followed by internalization and degradation. Forms heterodimer with SERPINA5. Interacts with SERPINE1. In complex with SERPINE1, interacts with SORL1. The single chain, almost fully active enzyme, can be further processed into a two-chain fully active form by a cleavage after Arg-310 catalyzed by plasmin, tissue kallikrein or factor Xa.

Its subcellular location is the secreted. It localises to the extracellular space. The catalysed reaction is Specific cleavage of Arg-|-Val bond in plasminogen to form plasmin.. Inhibited by SERPINA5. Inhibited by SERPINE1. Functionally, converts the abundant, but inactive, zymogen plasminogen to plasmin by hydrolyzing a single Arg-Val bond in plasminogen. By controlling plasmin-mediated proteolysis, it plays an important role in tissue remodeling and degradation, in cell migration and many other physiopathological events. During oocyte activation, plays a role in cortical granule reaction in the zona reaction, which contributes to the block to polyspermy. The sequence is that of Tissue-type plasminogen activator (PLAT) from Sus scrofa (Pig).